The primary structure comprises 322 residues: Mas-related G-protein coupled receptor member X3 (322 aa).

Residues 1–31 (MDSTIPVLGTELTPINGREETPCYKQTLSFT) are Extracellular-facing. The helical transmembrane segment at 32-52 (GLTCIVSLVALTGNAVVLWLL) threads the bilayer. Residues 53 to 60 (GCRMRRNA) lie on the Cytoplasmic side of the membrane. The helical transmembrane segment at 61 to 81 (VSIYILNLVAADFLFLSGHII) threads the bilayer. Topologically, residues 82–96 (CSPLRLINIRHPISK) are extracellular. A helical transmembrane segment spans residues 97–117 (ILSPVMTFPYFIGLSMLSAIS). At 118 to 140 (TERCLSILWPIWYHCRRPRYLSS) the chain is on the cytoplasmic side. A helical transmembrane segment spans residues 141–161 (VMCVLLWALSLLRSILEWMFC). Over 162–177 (DFLFSGANSVWCETSD) the chain is Extracellular. The chain crosses the membrane as a helical span at residues 178–198 (FITIAWLVFLCVVLCGSSLVL). Residues 199-213 (LVRILCGSRKMPLTR) are Cytoplasmic-facing. A helical transmembrane segment spans residues 214 to 234 (LYVTILLTVLVFLLCGLPFGI). Residues 235-254 (QWALFSRIHLDWKVLFCHVH) are Extracellular-facing. Residues 255 to 275 (LVSIFLSALNSSANPIIYFFV) form a helical membrane-spanning segment. The Cytoplasmic segment spans residues 276 to 322 (GSFRQRQNRQNLKLVLQRALQDTPEVDEGGGWLPQETLELSGSRLEQ).

This sequence belongs to the G-protein coupled receptor 1 family. Mas subfamily. Uniquely localized in a subset of small dorsal root and trigeminal sensory neurons.

It localises to the cell membrane. Its function is as follows. Orphan receptor. Probably involved in the function of nociceptive neurons. May regulate nociceptor function and/or development, including the sensation or modulation of pain. Potently activated by enkephalins. This is Mas-related G-protein coupled receptor member X3 (MRGPRX3) from Homo sapiens (Human).